Here is a 129-residue protein sequence, read N- to C-terminus: D-ribose pyranase (129 aa).

The active-site Proton donor is the histidine 20. Substrate-binding positions include aspartate 28, histidine 96, and tyrosine 118–asparagine 120.

It belongs to the RbsD / FucU family. RbsD subfamily. In terms of assembly, homodecamer.

It localises to the cytoplasm. It carries out the reaction beta-D-ribopyranose = beta-D-ribofuranose. Its pathway is carbohydrate metabolism; D-ribose degradation; D-ribose 5-phosphate from beta-D-ribopyranose: step 1/2. Its function is as follows. Catalyzes the interconversion of beta-pyran and beta-furan forms of D-ribose. This chain is D-ribose pyranase, found in Halalkalibacterium halodurans (strain ATCC BAA-125 / DSM 18197 / FERM 7344 / JCM 9153 / C-125) (Bacillus halodurans).